Consider the following 284-residue polypeptide: HTH-type transcriptional activator RhaR (284 aa).

Positions 181 to 279 (DMLMNALRAS…GVSPSAYRQR (99 aa)) constitute an HTH araC/xylS-type domain. DNA-binding regions (H-T-H motif) lie at residues 198 to 219 (EAFCEQHHFSARSLRSRFKEQT) and 246 to 269 (IGDVAALCGFEDSNYFSVVFHQAF).

As to quaternary structure, binds DNA as a dimer.

Its subcellular location is the cytoplasm. Functionally, activates expression of the rhaSR operon in response to L-rhamnose. The polypeptide is HTH-type transcriptional activator RhaR (Pectobacterium atrosepticum (strain SCRI 1043 / ATCC BAA-672) (Erwinia carotovora subsp. atroseptica)).